Here is a 575-residue protein sequence, read N- to C-terminus: 5-aminolevulinate synthase, mitochondrial (575 aa).

The N-terminal 55 residues, 1–55 (MESITRVSMSVCPFVKSSSAQALRQLSKNSALTSQARQCPFMGAALNAKESTRSY), are a transit peptide targeting the mitochondrion. Substrate contacts are provided by Arg-124, Ser-237, and Lys-256. Positions 289, 317, and 361 each coordinate pyridoxal 5'-phosphate. Lys-364 is an active-site residue. Lys-364 carries the post-translational modification N6-(pyridoxal phosphate)lysine. Pyridoxal 5'-phosphate-binding residues include Thr-393 and Thr-394. Position 479 (Thr-479) interacts with substrate.

Belongs to the class-II pyridoxal-phosphate-dependent aminotransferase family. As to quaternary structure, homodimer. The cofactor is pyridoxal 5'-phosphate.

Its subcellular location is the mitochondrion matrix. The catalysed reaction is succinyl-CoA + glycine + H(+) = 5-aminolevulinate + CO2 + CoA. It participates in porphyrin-containing compound metabolism; protoporphyrin-IX biosynthesis; 5-aminolevulinate from glycine: step 1/1. Its function is as follows. Catalyzes the synthesis of 5-aminolevulinate (ALA) from succinyl-CoA and glycine, the first and rate-limiting step in heme biosynthesis. This chain is 5-aminolevulinate synthase, mitochondrial (HEM1), found in Debaryomyces hansenii (strain ATCC 36239 / CBS 767 / BCRC 21394 / JCM 1990 / NBRC 0083 / IGC 2968) (Yeast).